The following is an 87-amino-acid chain: Putative defensin-like protein 231 (87 aa).

An N-terminal signal peptide occupies residues 1–26; the sequence is MKFATCFLVSYVLVFLVLSVCKEVEA. Disulfide bonds link Cys-30/Cys-85, Cys-40/Cys-66, Cys-48/Cys-79, and Cys-64/Cys-81.

Belongs to the DEFL family.

The protein localises to the secreted. The sequence is that of Putative defensin-like protein 231 (SCRL25) from Arabidopsis thaliana (Mouse-ear cress).